The sequence spans 424 residues: Gamma-glutamyl phosphate reductase (424 aa).

It belongs to the gamma-glutamyl phosphate reductase family.

The protein resides in the cytoplasm. It catalyses the reaction L-glutamate 5-semialdehyde + phosphate + NADP(+) = L-glutamyl 5-phosphate + NADPH + H(+). It participates in amino-acid biosynthesis; L-proline biosynthesis; L-glutamate 5-semialdehyde from L-glutamate: step 2/2. Functionally, catalyzes the NADPH-dependent reduction of L-glutamate 5-phosphate into L-glutamate 5-semialdehyde and phosphate. The product spontaneously undergoes cyclization to form 1-pyrroline-5-carboxylate. The protein is Gamma-glutamyl phosphate reductase of Shewanella sediminis (strain HAW-EB3).